A 340-amino-acid chain; its full sequence is Ferredoxin--NADP reductase (340 aa).

Aspartate 33, glutamine 41, tyrosine 46, alanine 86, phenylalanine 120, aspartate 286, and threonine 327 together coordinate FAD.

It belongs to the ferredoxin--NADP reductase type 2 family. Homodimer. FAD is required as a cofactor.

It carries out the reaction 2 reduced [2Fe-2S]-[ferredoxin] + NADP(+) + H(+) = 2 oxidized [2Fe-2S]-[ferredoxin] + NADPH. The polypeptide is Ferredoxin--NADP reductase (Rickettsia rickettsii (strain Iowa)).